The sequence spans 333 residues: Low specificity L-threonine aldolase (333 aa).

Lys197 is subject to N6-(pyridoxal phosphate)lysine.

It belongs to the threonine aldolase family. In terms of assembly, homotetramer. The cofactor is pyridoxal 5'-phosphate.

It carries out the reaction L-threonine = acetaldehyde + glycine. It catalyses the reaction L-allo-threonine = acetaldehyde + glycine. Catalyzes the cleavage of L-allo-threonine and L-threonine to glycine and acetaldehyde. L-threo-phenylserine and L-erythro-phenylserine are also good substrates. The sequence is that of Low specificity L-threonine aldolase (ltaE) from Escherichia coli (strain K12).